Consider the following 145-residue polypeptide: Deoxyuridine 5'-triphosphate nucleotidohydrolase (145 aa).

Residues 65-67 (RSG), N78, and 82-84 (TID) contribute to the substrate site.

This sequence belongs to the dUTPase family. Mg(2+) serves as cofactor.

The catalysed reaction is dUTP + H2O = dUMP + diphosphate + H(+). The protein operates within pyrimidine metabolism; dUMP biosynthesis; dUMP from dCTP (dUTP route): step 2/2. Functionally, this enzyme is involved in nucleotide metabolism: it produces dUMP, the immediate precursor of thymidine nucleotides and it decreases the intracellular concentration of dUTP so that uracil cannot be incorporated into DNA. In Clostridium tetani (strain Massachusetts / E88), this protein is Deoxyuridine 5'-triphosphate nucleotidohydrolase.